We begin with the raw amino-acid sequence, 442 residues long: tRNA modification GTPase MnmE (442 aa).

(6S)-5-formyl-5,6,7,8-tetrahydrofolate contacts are provided by R22, E79, and K119. In terms of domain architecture, TrmE-type G spans 216 to 366; sequence GIKTCLVGAP…LLEKIKSIFA (151 aa). N226 serves as a coordination point for K(+). Residues 226–231, 245–251, and 270–273 contribute to the GTP site; these read NSGKSS, SEIPGTT, and DTAG. Position 230 (S230) interacts with Mg(2+). The K(+) site is built by S245, I247, and T250. T251 is a binding site for Mg(2+). K442 serves as a coordination point for (6S)-5-formyl-5,6,7,8-tetrahydrofolate.

It belongs to the TRAFAC class TrmE-Era-EngA-EngB-Septin-like GTPase superfamily. TrmE GTPase family. As to quaternary structure, homodimer. Heterotetramer of two MnmE and two MnmG subunits. Requires K(+) as cofactor.

It is found in the cytoplasm. Its function is as follows. Exhibits a very high intrinsic GTPase hydrolysis rate. Involved in the addition of a carboxymethylaminomethyl (cmnm) group at the wobble position (U34) of certain tRNAs, forming tRNA-cmnm(5)s(2)U34. The chain is tRNA modification GTPase MnmE from Mesomycoplasma hyopneumoniae (strain J / ATCC 25934 / NCTC 10110) (Mycoplasma hyopneumoniae).